The chain runs to 420 residues: Acetyl-CoA acetyltransferase, mitochondrial (420 aa).

A mitochondrion-targeting transit peptide spans M1–Y26. C119 (acyl-thioester intermediate) is an active-site residue. CoA contacts are provided by residues Y212, K251–D253, and K256. Position 212 (Y212) interacts with K(+). K(+)-binding residues include A273, A274, and A276. Residue S277 coordinates CoA. V374 is a binding site for K(+). The active-site Proton donor/acceptor is the C406.

Belongs to the thiolase-like superfamily. Thiolase family. As to quaternary structure, homotetramer.

The protein localises to the mitochondrion. The catalysed reaction is 2 acetyl-CoA = acetoacetyl-CoA + CoA. It carries out the reaction propanoyl-CoA + acetyl-CoA = 2-methyl-3-oxobutanoyl-CoA + CoA. It participates in lipid metabolism; fatty acid beta-oxidation. Its function is as follows. This is one of the enzymes that catalyzes the last step of the mitochondrial beta-oxidation pathway, an aerobic process breaking down fatty acids into acetyl-CoA. Using free coenzyme A/CoA, catalyzes the thiolytic cleavage of medium- to long-chain 3-oxoacyl-CoAs into acetyl-CoA and a fatty acyl-CoA shortened by two carbon atoms. The activity of the enzyme is reversible and it can also catalyze the condensation of two acetyl-CoA molecules into acetoacetyl-CoA. Thereby, it plays a major role in ketone body metabolism. This chain is Acetyl-CoA acetyltransferase, mitochondrial (acat1), found in Danio rerio (Zebrafish).